The primary structure comprises 35 residues: Kappa-theraphotoxin-Tb1c (35 aa).

Cystine bridges form between Cys-3/Cys-18, Cys-10/Cys-23, and Cys-17/Cys-30.

This sequence belongs to the neurotoxin 10 (Hwtx-1) family. 59 (Tltx) subfamily. As to quaternary structure, monomer. Expressed by the venom gland.

The protein localises to the secreted. Its function is as follows. Blocks Kv4.2/KCND2 voltage-gated potassium channels probably by shifting the voltage-dependence of channel activation to more depolarized potentials and by binding to the S3-S4 linker region of the voltage sensor domain. The polypeptide is Kappa-theraphotoxin-Tb1c (Theraphosa blondi (Goliath birdeating spider)).